Here is a 172-residue protein sequence, read N- to C-terminus: MPLLDSFTVDHTRMHAPAVRVAKTMQTPKGDTITVFDLRFTAPNKDILSEKGIHTLEHLYAGFMRKHLNGASVEIIDISPMGCRTGFYMSLIGAPSEQDVASAWTASMEDVLKVESQNKIPELNEYQCGTAAMHSLDEAKQIAQNILAAGISVNKNDELALPEAMLKELKVD.

The Fe cation site is built by H54, H58, and C128.

It belongs to the LuxS family. Homodimer. The cofactor is Fe cation.

It catalyses the reaction S-(5-deoxy-D-ribos-5-yl)-L-homocysteine = (S)-4,5-dihydroxypentane-2,3-dione + L-homocysteine. Functionally, involved in the synthesis of autoinducer 2 (AI-2) which is secreted by bacteria and is used to communicate both the cell density and the metabolic potential of the environment. The regulation of gene expression in response to changes in cell density is called quorum sensing. Catalyzes the transformation of S-ribosylhomocysteine (RHC) to homocysteine (HC) and 4,5-dihydroxy-2,3-pentadione (DPD). This Vibrio vulnificus (strain CMCP6) protein is S-ribosylhomocysteine lyase.